A 739-amino-acid polypeptide reads, in one-letter code: Nucleoprotein (739 aa).

Residues 334 to 363 (VNVGEQYQQLREAATEAEKQLQQYAESREL) adopt a coiled-coil conformation. Residues 415–646 (PKTSGHYDDD…QDSDNTQPEH (232 aa)) form a disordered region. Low complexity-rich tracts occupy residues 449-458 (SQDTTIPDVV) and 504-514 (KGGQQKNSQKG). Over residues 520–530 (RQTQSRPTQNI) the composition is skewed to polar residues. Positions 567–579 (EEADPLDDADDET) are enriched in acidic residues. Over residues 611–638 (YRDHSEKKELPQDERQDQDHTQEARNQD) the composition is skewed to basic and acidic residues.

It belongs to the filoviruses nucleoprotein family. As to quaternary structure, homooligomer. Homomultimerizes to form the nucleocapsid. Binds to viral genomic RNA. Interacts with VP35 and VP30 to form the nucleocapsid. Interacts with host PPP2R5C; this interaction leads to VP30 dephosphorylation and viral transcription. Interacts with VP24; this interaction facilitates nucleocapsid assembly and genome packaging. Interacts with matrix protein VP40; this interaction allows recruitment of the nucleocapsid into progeny virions. Interacts with host STAU1. Interacts with host NXF1 (via RNA-binding domain); this interaction recruits NXF1 to the inclusion bodies were viral replication takes place, probably to export viral mRNA-NXF1 complexes from these sites. Interacts with host CCDC92; this interaction sequesters NP in the host cytoplasm. Interacts with host TRIM14. Phosphorylated and O-glycosylated by host. Acetylated by host EP300 in vitro.

It localises to the virion. It is found in the host cytoplasm. Functionally, oligomerizes into helical capsid to encapsidate the viral genome, protecting it from nucleases and the cellular innate immune response. VP35 binds to and stabilizes monomeric NP, keeping it soluble. Upon virus replication, NP is recruited to bind cooperatively viral genomic RNA and VP35 is released. The encapsidated genomic RNA is termed the nucleocapsid and serves as template for transcription and replication. The nucleocapsid is helical with a pitch of 10.81 NP per turn and a diameter of about 22nm. Each NP binds to six nucleotides of viral genomic RNA, three being exposed to the solvant and three hidden into the nucleocapsid. Also recruits host PPP2R5C phosphatase to dephosphorylate VP30 and thereby promote viral transcription. Upon virion assembly and budding, NP binds to VP24 and possibly host STAU1. This is Nucleoprotein (NP) from Zaire ebolavirus (strain Gabon-94) (ZEBOV).